Reading from the N-terminus, the 414-residue chain is Probable acetyl-CoA acetyltransferase (414 aa).

The Acyl-thioester intermediate role is filled by Cys-110. Residues Tyr-205, 244–246 (KVL), and Lys-249 contribute to the CoA site. Tyr-205 provides a ligand contact to K(+). The K(+) site is built by Ala-266 and Ala-268. Ser-269 provides a ligand contact to CoA. Val-366 serves as a coordination point for K(+). Residues His-370 and Cys-400 each act as proton acceptor in the active site.

This sequence belongs to the thiolase-like superfamily. Thiolase family.

It catalyses the reaction 2 acetyl-CoA = acetoacetyl-CoA + CoA. This chain is Probable acetyl-CoA acetyltransferase, found in Dictyostelium discoideum (Social amoeba).